Here is a 633-residue protein sequence, read N- to C-terminus: Pesticidal crystal protein Cry2Aa (633 aa).

Belongs to the delta endotoxin family.

Functionally, promotes colloidosmotic lysis by binding to the midgut epithelial cells of both dipteran (Aedes aegypti) and lepidopteran (Manduca sexta) larvae. In Bacillus thuringiensis subsp. kurstaki, this protein is Pesticidal crystal protein Cry2Aa (cry2Aa).